We begin with the raw amino-acid sequence, 144 residues long: 3-hydroxyacyl-[acyl-carrier-protein] dehydratase FabZ (144 aa).

Residue His-51 is part of the active site.

It belongs to the thioester dehydratase family. FabZ subfamily.

The protein localises to the cytoplasm. It catalyses the reaction a (3R)-hydroxyacyl-[ACP] = a (2E)-enoyl-[ACP] + H2O. In terms of biological role, involved in unsaturated fatty acids biosynthesis. Catalyzes the dehydration of short chain beta-hydroxyacyl-ACPs and long chain saturated and unsaturated beta-hydroxyacyl-ACPs. The polypeptide is 3-hydroxyacyl-[acyl-carrier-protein] dehydratase FabZ (Lactococcus lactis subsp. cremoris (strain SK11)).